Reading from the N-terminus, the 87-residue chain is DNA/RNA-binding protein Alba (87 aa).

Residue Lys9 is modified to N6-acetyllysine.

Belongs to the histone-like Alba family. In terms of processing, acetylated. Acetylation at Lys-9 decreases DNA-binding affinity.

The protein localises to the cytoplasm. It is found in the chromosome. In terms of biological role, binds double-stranded DNA tightly but without sequence specificity. Involved in DNA compaction. In Methanocaldococcus jannaschii (strain ATCC 43067 / DSM 2661 / JAL-1 / JCM 10045 / NBRC 100440) (Methanococcus jannaschii), this protein is DNA/RNA-binding protein Alba.